A 185-amino-acid polypeptide reads, in one-letter code: Pre-histone-like nucleoprotein (185 aa).

Position 2 is an N-acetylserine; by host (S2). Residues 2-23 (SILISPDNNTGWGLCSAGMYGG) constitute a propeptide that is removed on maturation. Phosphothreonine; by host is present on T55. Residue S172 is modified to Phosphoserine; by host. The short motif at 175-185 (RVPVRSRPPRS) is the Nuclear localization signal element.

Belongs to the adenoviridae histone-like nucleoprotein family. As to quaternary structure, interacts with the core-capsid bridging protein; this interaction bridges the virus core to the capsid. Interacts with host NPM1; this interaction might play a role in placing the pre-histone-like nucleoprotein on the viral DNA or regulating viral gene expression. Interacts with host HMGB1; this interaction inhibits host immune response. Post-translationally, cleaved near the N-terminus by the viral protease during virion maturation to form the mature protein.

Its subcellular location is the virion. It localises to the host nucleus. The protein localises to the host nucleolus. In terms of biological role, plays a role in the inhibition of host immune response within the nucleus. Interacts with cellular nucleosomes and immobilizes the host immune danger signal HMGB1 on chromatin. In turn, prevents HMGB1 release out of the cell and thus decreases inflammation. Also plays a role in the wrapping and condensation of the viral DNA. May also promote viral genome import into the nucleus. The protein is Pre-histone-like nucleoprotein of Human adenovirus F serotype 40 (HAdV-40).